We begin with the raw amino-acid sequence, 448 residues long: MNMLAPTAKNAFTPASLDRPAYQSGFGNEFSTEALPGALPHGQNSPQKAPYGLYAEQISGTAFTAPRAHNRRSWLYRIRPGAVHLPFEAMAQGRFHSHFNEVPPSPNQLRWDPLPAPAAGTDFIDGIVTFAGNGGPDAQTGCGIHLYAANADMTDRFFYNADGELLIVPQQGRLRLLTEMGVVDVEPLEIAVIPRGVRFRVELPDGDARGYICENFGALFRLPDLGVIGSNGLANPRDFLTPHAWYEDREGAFELVAKFQGSLWTAKIGHSPLDVVAWHGNLAPYKYDLRLFNTIGSISYDHPDPSIFLVLQSPSATPGVDTIDFVIFPPRWLAAENTFRPPWFHRNVASEFMGLIQGVYDAKAEGFVPGGASLHNCMSGHGPDADTFEKASNSDTTKPHKVDATMAFMFETPAVIRPTRFAAESAQLQAKYFECWQGLKKHFDPSKR.

The active-site Proton acceptor is the His302. Fe cation is bound by residues His345 and Glu351. Tyr360 and His381 together coordinate homogentisate. Position 381 (His381) interacts with Fe cation.

The protein belongs to the homogentisate dioxygenase family. In terms of assembly, hexamer; dimer of trimers. Requires Fe cation as cofactor.

It catalyses the reaction homogentisate + O2 = 4-maleylacetoacetate + H(+). The protein operates within amino-acid degradation; L-phenylalanine degradation; acetoacetate and fumarate from L-phenylalanine: step 4/6. Functionally, involved in the catabolism of homogentisate (2,5-dihydroxyphenylacetate or 2,5-OH-PhAc), a central intermediate in the degradation of phenylalanine and tyrosine. Catalyzes the oxidative ring cleavage of the aromatic ring of homogentisate to yield maleylacetoacetate. This chain is Homogentisate 1,2-dioxygenase, found in Ralstonia pickettii (strain 12J).